The sequence spans 212 residues: N-(5'-phosphoribosyl)anthranilate isomerase (212 aa).

The protein belongs to the TrpF family.

It catalyses the reaction N-(5-phospho-beta-D-ribosyl)anthranilate = 1-(2-carboxyphenylamino)-1-deoxy-D-ribulose 5-phosphate. The protein operates within amino-acid biosynthesis; L-tryptophan biosynthesis; L-tryptophan from chorismate: step 3/5. This is N-(5'-phosphoribosyl)anthranilate isomerase from Myxococcus xanthus (strain DK1622).